The chain runs to 797 residues: MKKLLIASLLFGTTTTVFAAPFVAKDIRVDGVQGDLEQQIRASLPVRAGQRVTDNDVANIVRSLFVSGRFDDVKAHQEGDVLVVSVVAKSIISDVKIKGNSVIPTEALKQNLDANGFKVGDVLIREKLNEFAKSVKEHYASVGRYNATVEPIVNTLPNNRAEILIQINEDDKAKLASLTFKGNESVSSSTLQEQMELQPDSWWKLWGNKFEGAQFEKDLQSIRDYYLNNGYAKAQITKTDVQLNDEKTKVNVTIDVNEGLQYDLRSARIIGNLGGMSAELEPLLSALHLNDTFRRSDIADVENAIKAKLGERGYGSATVNSVPDFDDANKTLAITLVVDAGRRLTVRQLRFEGNTVSADSTLRQEMRQQEGTWYNSQLVELGKIRLDRTGFFETVENRIDPINGSNDEVDVVYKVKERNTGSINFGIGYGTESGISYQASVKQDNFLGTGAAVSIAGTKNDYGTSVNLGYTEPYFTKDGVSLGGNVFFENYDNSKSDTSSNYKRTTYGSNVTLGFPVNENNSYYVGLGHTYNKISNFALEYNRNLYIQSMKFKGNGIKTNDFDFSFGWNYNSLNRGYFPTKGVKASLGGRVTIPGSDNKYYKLSADVQGFYPLDRDHLWVVSAKASAGYANGFGNKRLPFYQTYTAGGIGSLRGFAYGSIGPNAIYAEYGNGSGTGTFKKISSDVIGGNAIATASAELIVPTPFVSDKSQNTVRTSLFVDAASVWNTKWKSDKNGLESDVLKRLPDYGKSSRIRASTGVGFQWQSPIGPLVFSYAKPIKKYENDDVEQFQFSIGGSF.

An N-terminal signal peptide occupies residues 1–19; it reads MKKLLIASLLFGTTTTVFA. POTRA domains follow at residues 22-89, 90-170, 173-259, 262-341, and 344-418; these read FVAK…VVAK, SIIS…INED, AKLA…VNEG, YDLR…VDAG, and LTVR…VKER.

This sequence belongs to the BamA family. As to quaternary structure, part of the Bam complex.

The protein localises to the cell outer membrane. In terms of biological role, part of the outer membrane protein assembly complex, which is involved in assembly and insertion of beta-barrel proteins into the outer membrane. This chain is Outer membrane protein assembly factor BamA, found in Haemophilus influenzae.